Consider the following 372-residue polypeptide: Chaperone protein DnaJ (372 aa).

In terms of domain architecture, J spans 5–70; sequence DYYEVLGVAK…DKRAAYDQFG (66 aa). The CR-type zinc-finger motif lies at 133 to 211; sequence GTETKIRIPT…CHGEGRVKKH (79 aa). The Zn(2+) site is built by Cys146, Cys149, Cys163, Cys166, Cys185, Cys188, Cys199, and Cys202. 4 CXXCXGXG motif repeats span residues 146 to 153, 163 to 170, 185 to 192, and 199 to 206; these read CGTCHGSG, CSACGGHG, CPRCGGTG, and CPSCHGEG.

It belongs to the DnaJ family. In terms of assembly, homodimer. Zn(2+) is required as a cofactor.

It is found in the cytoplasm. Functionally, participates actively in the response to hyperosmotic and heat shock by preventing the aggregation of stress-denatured proteins and by disaggregating proteins, also in an autonomous, DnaK-independent fashion. Unfolded proteins bind initially to DnaJ; upon interaction with the DnaJ-bound protein, DnaK hydrolyzes its bound ATP, resulting in the formation of a stable complex. GrpE releases ADP from DnaK; ATP binding to DnaK triggers the release of the substrate protein, thus completing the reaction cycle. Several rounds of ATP-dependent interactions between DnaJ, DnaK and GrpE are required for fully efficient folding. Also involved, together with DnaK and GrpE, in the DNA replication of plasmids through activation of initiation proteins. This is Chaperone protein DnaJ from Thiobacillus denitrificans (strain ATCC 25259 / T1).